A 690-amino-acid polypeptide reads, in one-letter code: Calpain-9 (690 aa).

The tract at residues 1-23 (MPYLHRSLRPQPQPVPGDARTIH) is disordered. Residues 42–337 (LFEDADFPAS…FDKVEICNLT (296 aa)) form the Calpain catalytic domain. Residues Leu-81, Gly-83, and Asp-88 each coordinate Ca(2+). Cys-97 is an active-site residue. Ca(2+) is bound at residue Glu-167. Catalysis depends on residues His-254 and Asn-278. Ca(2+) contacts are provided by Glu-284, Asp-291, Leu-312, Asp-314, and Glu-316. A domain III region spans residues 338–521 (PDALEDSALH…PQEEETEEEQ (184 aa)). EF-hand domains follow at residues 518 to 552 (EEEQQFRALFQRVAGEDMEVSAEELEYVLNAVLQK), 561 to 589 (LSLLSCRNIISLMDTSGNGKLEFEEFRVF), and 591 to 626 (DKLKHWMDLFLQFDVDKSGTMSSYELRTALKAAGFQ). The interval 522–690 (QFRALFQRVA…NEFISLTMNI (169 aa)) is domain IV. The Ca(2+) site is built by Asp-574, Ser-576, Asn-578, Lys-580, Glu-585, Asp-604, Asp-606, Ser-608, Thr-610, and Glu-615.

This sequence belongs to the peptidase C2 family. As to expression, predominantly expressed in stomach and small intestine, although low levels of expression in other organs.

The protein localises to the cytoplasm. Calcium-regulated non-lysosomal thiol-protease. The chain is Calpain-9 (Capn9) from Mus musculus (Mouse).